We begin with the raw amino-acid sequence, 502 residues long: Glutamate--tRNA ligase (502 aa).

Positions 9-19 (PSPTGFPHVGT) match the 'HIGH' region motif. A 'KMSKS' region motif is present at residues 250–254 (KLSKR). Lysine 253 lines the ATP pocket.

This sequence belongs to the class-I aminoacyl-tRNA synthetase family. Glutamate--tRNA ligase type 1 subfamily. As to quaternary structure, monomer.

It localises to the cytoplasm. It catalyses the reaction tRNA(Glu) + L-glutamate + ATP = L-glutamyl-tRNA(Glu) + AMP + diphosphate. In terms of biological role, catalyzes the attachment of glutamate to tRNA(Glu) in a two-step reaction: glutamate is first activated by ATP to form Glu-AMP and then transferred to the acceptor end of tRNA(Glu). The polypeptide is Glutamate--tRNA ligase (Acinetobacter baumannii (strain AYE)).